The primary structure comprises 477 residues: Bifunctional protein HldE (477 aa).

The interval 1–318 (MKVNLPAFER…ENAVRGRADT (318 aa)) is ribokinase. 195 to 198 (NLSE) serves as a coordination point for ATP. The active site involves Asp264. The tract at residues 344-477 (MTNGVFDILH…IKKIQTESEK (134 aa)) is cytidylyltransferase.

It in the N-terminal section; belongs to the carbohydrate kinase PfkB family. In the C-terminal section; belongs to the cytidylyltransferase family. Homodimer.

The enzyme catalyses D-glycero-beta-D-manno-heptose 7-phosphate + ATP = D-glycero-beta-D-manno-heptose 1,7-bisphosphate + ADP + H(+). The catalysed reaction is D-glycero-beta-D-manno-heptose 1-phosphate + ATP + H(+) = ADP-D-glycero-beta-D-manno-heptose + diphosphate. Its pathway is nucleotide-sugar biosynthesis; ADP-L-glycero-beta-D-manno-heptose biosynthesis; ADP-L-glycero-beta-D-manno-heptose from D-glycero-beta-D-manno-heptose 7-phosphate: step 1/4. The protein operates within nucleotide-sugar biosynthesis; ADP-L-glycero-beta-D-manno-heptose biosynthesis; ADP-L-glycero-beta-D-manno-heptose from D-glycero-beta-D-manno-heptose 7-phosphate: step 3/4. Functionally, catalyzes the phosphorylation of D-glycero-D-manno-heptose 7-phosphate at the C-1 position to selectively form D-glycero-beta-D-manno-heptose-1,7-bisphosphate. Catalyzes the ADP transfer from ATP to D-glycero-beta-D-manno-heptose 1-phosphate, yielding ADP-D-glycero-beta-D-manno-heptose. The polypeptide is Bifunctional protein HldE (Salmonella agona (strain SL483)).